A 314-amino-acid chain; its full sequence is Type II methyltransferase M.HpaI (314 aa).

The protein belongs to the N(4)/N(6)-methyltransferase family.

The catalysed reaction is a 2'-deoxyadenosine in DNA + S-adenosyl-L-methionine = an N(6)-methyl-2'-deoxyadenosine in DNA + S-adenosyl-L-homocysteine + H(+). Its function is as follows. A beta subtype methylase that recognizes the double-stranded sequence 5'-GTTAAC-3', methylates A-5 on both strands, and protects the DNA from cleavage by the HpaI endonuclease. In Haemophilus parainfluenzae, this protein is Type II methyltransferase M.HpaI (hpaIM).